Consider the following 467-residue polypeptide: Chromosomal replication initiator protein DnaA (467 aa).

Residues 1–90 (MSLSLWQQCL…KSVTQTPQAA (90 aa)) form a domain I, interacts with DnaA modulators region. The interval 91–130 (VTSNVAAPAQVAQTQPQRAAPSTRSGWDNVPAPAEPTYRS) is domain II. Residues 97–111 (APAQVAQTQPQRAAP) are compositionally biased toward low complexity. The tract at residues 97–119 (APAQVAQTQPQRAAPSTRSGWDN) is disordered. Residues 131–347 (NVNVKHTFDN…GALNRVIANA (217 aa)) are domain III, AAA+ region. ATP contacts are provided by Gly175, Gly177, Lys178, and Thr179. Residues 348–467 (NFTGRAITID…FSNLIRTLSS (120 aa)) form a domain IV, binds dsDNA region.

The protein belongs to the DnaA family. Oligomerizes as a right-handed, spiral filament on DNA at oriC.

The protein localises to the cytoplasm. Functionally, plays an essential role in the initiation and regulation of chromosomal replication. ATP-DnaA binds to the origin of replication (oriC) to initiate formation of the DNA replication initiation complex once per cell cycle. Binds the DnaA box (a 9 base pair repeat at the origin) and separates the double-stranded (ds)DNA. Forms a right-handed helical filament on oriC DNA; dsDNA binds to the exterior of the filament while single-stranded (ss)DNA is stabiized in the filament's interior. The ATP-DnaA-oriC complex binds and stabilizes one strand of the AT-rich DNA unwinding element (DUE), permitting loading of DNA polymerase. After initiation quickly degrades to an ADP-DnaA complex that is not apt for DNA replication. Binds acidic phospholipids. This Escherichia coli O157:H7 protein is Chromosomal replication initiator protein DnaA.